The sequence spans 474 residues: L-arabinose isomerase (474 aa).

Mn(2+) is bound by residues E306, E331, H348, and H447.

It belongs to the arabinose isomerase family. It depends on Mn(2+) as a cofactor.

The enzyme catalyses beta-L-arabinopyranose = L-ribulose. It functions in the pathway carbohydrate degradation; L-arabinose degradation via L-ribulose; D-xylulose 5-phosphate from L-arabinose (bacterial route): step 1/3. Its function is as follows. Catalyzes the conversion of L-arabinose to L-ribulose. In Pediococcus pentosaceus (strain ATCC 25745 / CCUG 21536 / LMG 10740 / 183-1w), this protein is L-arabinose isomerase.